The sequence spans 345 residues: MRVVVAMSGGVDSSVVAGLMHEAGHEVIGVTLQLYDHGAATGRKGACCAGQDIHDARNVADRLGIAHYVIDAEAAFRAAVIGDFAESYAEGRTPVPCVRCNQHLKFGDLLGLARDLGAEALATGHYVRREDGPEGAELHRAVDARRDQSWFLFATTRDQLAFSRFPLGTMPDKDAVRAEAARMNLPVAEKPDSQDICFVPSGTYADIVAKLRPDAAAPGEIVTEDGAVLDRHQGIARYTVGQAKRLGAASGHVVTRIDAARRRIVVGPRGAGGREVRIAEPNWLIDPPAAPFRASVKLRAGETPHPAEIDIARNLVTLDTPALAAPGQACVVYRESRVLGGGFIL.

ATP-binding positions include 6–13 (AMSGGVDS) and L32. C100 acts as the Nucleophile in catalysis. C100 and C197 form a disulfide bridge. G124 provides a ligand contact to ATP. Positions 146 to 148 (RDQ) are interaction with tRNA. The Cysteine persulfide intermediate role is filled by C197.

This sequence belongs to the MnmA/TRMU family.

The protein localises to the cytoplasm. The enzyme catalyses S-sulfanyl-L-cysteinyl-[protein] + uridine(34) in tRNA + AH2 + ATP = 2-thiouridine(34) in tRNA + L-cysteinyl-[protein] + A + AMP + diphosphate + H(+). Functionally, catalyzes the 2-thiolation of uridine at the wobble position (U34) of tRNA, leading to the formation of s(2)U34. This chain is tRNA-specific 2-thiouridylase MnmA, found in Acidiphilium cryptum (strain JF-5).